The chain runs to 380 residues: Fibromodulin (380 aa).

The first 18 residues, 1–18 (MRWANILLVAGLCRASLG), serve as a signal peptide directing secretion. The LRRNT domain occupies 71–109 (EAQQASSWQCPQECDCPPNFSSAMYCDTRNLRYLPFVPT). Residue Asn89 is glycosylated (N-linked (GlcNAc...) asparagine). LRR repeat units follow at residues 110-131 (RMKY…AFDN), 134-147 (ELEW…QISS), 160-180 (NLER…PLPR), 181-202 (SLRE…ALEG), 205-227 (NLTA…KGLK), 228-248 (SLIL…GLPM), 249-270 (ALEQ…YFKV), and 273-293 (KLLY…STNT). N-linked (GlcNAc...) (keratan sulfate) asparagine glycosylation is present at Asn131. An N-linked (GlcNAc...) (keratan sulfate) asparagine glycan is attached at Asn170. A glycan (N-linked (GlcNAc...) (keratan sulfate) asparagine) is linked at Asn205. Residue Asn295 is glycosylated (N-linked (GlcNAc...) (keratan sulfate) asparagine). 2 LRR repeats span residues 298-317 (SILE…RVST) and 318-339 (NLEN…SFCT). A disulfide bond links Cys338 and Cys371. Residue Asn345 is glycosylated (N-linked (GlcNAc...) asparagine). An LRR 11 repeat occupies 348–371 (RLQVLRLDGNEIKRNAMPPDAPLC).

Belongs to the small leucine-rich proteoglycan (SLRP) family. SLRP class II subfamily. Binds to type I and type II collagen. Binds keratan sulfate chains.

The protein localises to the secreted. It is found in the extracellular space. The protein resides in the extracellular matrix. Its function is as follows. Affects the rate of fibrils formation. May have a primary role in collagen fibrillogenesis. This is Fibromodulin (FMOD) from Gallus gallus (Chicken).